Reading from the N-terminus, the 211-residue chain is MTGDHIKVIYFNGRGRAESIRMTLVAAGVNYEDERISFQDWPKIKPTIPGGRLPAVKITDNHGHVKWMVESLAIARYMAKKHHMMGGTEEEYYNVEKLIGQAEDLEHEYYKTLMKPEEEKQKIIKEILNGKVPVLLDIICESLKASTGKLAVGDKVTLADLVLIAVIDHVTDLDKEFLTGKYPEIHKHRENLLASSPRLAKYLSDRAATPF.

The GST N-terminal domain maps to 4-86 (DHIKVIYFNG…YMAKKHHMMG (83 aa)). Tyr-10, Arg-16, Trp-41, Lys-45, Leu-53, Glu-70, Ser-71, and Asp-104 together coordinate glutathione. Residues 88–211 (TEEEYYNVEK…YLSDRAATPF (124 aa)) enclose the GST C-terminal domain.

Belongs to the GST superfamily. Mu family. As to quaternary structure, homodimer.

It catalyses the reaction RX + glutathione = an S-substituted glutathione + a halide anion + H(+). In terms of biological role, conjugation of reduced glutathione to a wide number of exogenous and endogenous hydrophobic electrophiles. GST isoenzymes appear to play a central role in the parasite detoxification system. Other functions are also suspected including a role in increasing the solubility of haematin in the parasite gut. This chain is Glutathione S-transferase class-mu 28 kDa isozyme, found in Schistosoma haematobium (Blood fluke).